The following is a 417-amino-acid chain: Serine hydroxymethyltransferase (417 aa).

(6S)-5,6,7,8-tetrahydrofolate is bound by residues Leu-121 and 125–127; that span reads GHL. At Lys-229 the chain carries N6-(pyridoxal phosphate)lysine. Residue 355–357 participates in (6S)-5,6,7,8-tetrahydrofolate binding; that stretch reads SPF.

It belongs to the SHMT family. In terms of assembly, homodimer. The cofactor is pyridoxal 5'-phosphate.

It is found in the cytoplasm. The catalysed reaction is (6R)-5,10-methylene-5,6,7,8-tetrahydrofolate + glycine + H2O = (6S)-5,6,7,8-tetrahydrofolate + L-serine. It participates in one-carbon metabolism; tetrahydrofolate interconversion. It functions in the pathway amino-acid biosynthesis; glycine biosynthesis; glycine from L-serine: step 1/1. Catalyzes the reversible interconversion of serine and glycine with tetrahydrofolate (THF) serving as the one-carbon carrier. This reaction serves as the major source of one-carbon groups required for the biosynthesis of purines, thymidylate, methionine, and other important biomolecules. Also exhibits THF-independent aldolase activity toward beta-hydroxyamino acids, producing glycine and aldehydes, via a retro-aldol mechanism. This chain is Serine hydroxymethyltransferase, found in Shewanella putrefaciens (strain CN-32 / ATCC BAA-453).